A 250-amino-acid chain; its full sequence is Cell division protein ZapD (250 aa).

Belongs to the ZapD family. Interacts with FtsZ.

Its subcellular location is the cytoplasm. In terms of biological role, cell division factor that enhances FtsZ-ring assembly. Directly interacts with FtsZ and promotes bundling of FtsZ protofilaments, with a reduction in FtsZ GTPase activity. The protein is Cell division protein ZapD of Yersinia enterocolitica serotype O:8 / biotype 1B (strain NCTC 13174 / 8081).